The following is a 382-amino-acid chain: Succinyl-diaminopimelate desuccinylase (382 aa).

Residue His73 coordinates Zn(2+). Asp75 is a catalytic residue. Asp106 contacts Zn(2+). Catalysis depends on Glu140, which acts as the Proton acceptor. The Zn(2+) site is built by Glu141, Glu169, and His355.

The protein belongs to the peptidase M20A family. DapE subfamily. Homodimer. It depends on Zn(2+) as a cofactor. Co(2+) serves as cofactor.

The catalysed reaction is N-succinyl-(2S,6S)-2,6-diaminopimelate + H2O = (2S,6S)-2,6-diaminopimelate + succinate. It functions in the pathway amino-acid biosynthesis; L-lysine biosynthesis via DAP pathway; LL-2,6-diaminopimelate from (S)-tetrahydrodipicolinate (succinylase route): step 3/3. Its function is as follows. Catalyzes the hydrolysis of N-succinyl-L,L-diaminopimelic acid (SDAP), forming succinate and LL-2,6-diaminopimelate (DAP), an intermediate involved in the bacterial biosynthesis of lysine and meso-diaminopimelic acid, an essential component of bacterial cell walls. This Cellvibrio japonicus (strain Ueda107) (Pseudomonas fluorescens subsp. cellulosa) protein is Succinyl-diaminopimelate desuccinylase.